A 201-amino-acid polypeptide reads, in one-letter code: 3-isopropylmalate dehydratase small subunit (201 aa).

Belongs to the LeuD family. LeuD type 1 subfamily. In terms of assembly, heterodimer of LeuC and LeuD.

The catalysed reaction is (2R,3S)-3-isopropylmalate = (2S)-2-isopropylmalate. It functions in the pathway amino-acid biosynthesis; L-leucine biosynthesis; L-leucine from 3-methyl-2-oxobutanoate: step 2/4. Catalyzes the isomerization between 2-isopropylmalate and 3-isopropylmalate, via the formation of 2-isopropylmaleate. The chain is 3-isopropylmalate dehydratase small subunit from Salmonella schwarzengrund (strain CVM19633).